A 726-amino-acid chain; its full sequence is Quinolinate synthase, chloroplastic (726 aa).

The transit peptide at 1 to 67 (MDAANLVMKS…KKPSNNSTFT (67 aa)) directs the protein to the chloroplast. Cys133 serves as the catalytic Cysteine persulfide intermediate. The iminosuccinate site is built by His283 and Ser309. Residue Cys363 participates in [4Fe-4S] cluster binding. Residues 392–394 (YIN) and Ser414 each bind iminosuccinate. Cys487 is a [4Fe-4S] cluster binding site. Iminosuccinate-binding positions include 513-515 (HFE) and Thr538. Cys643 is a [4Fe-4S] cluster binding site.

It belongs to the quinolinate synthase family. Type 1 subfamily. In terms of assembly, homodimer. It depends on [4Fe-4S] cluster as a cofactor.

The protein localises to the plastid. It is found in the chloroplast. It catalyses the reaction iminosuccinate + dihydroxyacetone phosphate = quinolinate + phosphate + 2 H2O + H(+). The protein operates within alkaloid biosynthesis; nicotine biosynthesis. It functions in the pathway cofactor biosynthesis; NAD(+) biosynthesis; quinolinate from iminoaspartate: step 1/1. Its function is as follows. Involved in the biosynthesis of pyridine alkaloid natural products, leading mainly to the production of anabasine, anatabine, nicotine and nornicotine, effective deterrents against herbivores with antiparasitic and pesticide properties (neurotoxins); nornicotine serves as the precursor in the synthesis of the carcinogen compound N'-nitrosonornicotine (NNN). Catalyzes the condensation of iminoaspartate with dihydroxyacetone phosphate to form quinolinate. This Nicotiana tabacum (Common tobacco) protein is Quinolinate synthase, chloroplastic.